The sequence spans 406 residues: NAC transcription factor NAM-B1 (406 aa).

The segment covering 1 to 11 has biased composition (polar residues); it reads MGSPDSSSGSA. The disordered stretch occupies residues 1–40; the sequence is MGSPDSSSGSAQKPPRHQHQHQPPPPRRQGSAPELPPGFR. Residues 35 to 204 form the NAC domain; sequence LPPGFRFHPT…DWVLCRIYKK (170 aa). The DNA-binding element occupies 137 to 210; the sequence is VGVKKALVFY…IYKKTSKAAA (74 aa).

The protein resides in the nucleus. In terms of biological role, transcription factor of the NAC family associated with the grain protein content (GPC). Sequences of the 11 European varieties of H.vulgare tested belongs to the same haplotype while the sequence found in H.spontaneum, an ancestor of the cultivated H.vulgare which has a higher GPC, belongs to an other haplotype. This is NAC transcription factor NAM-B1 (NAM-B1) from Hordeum vulgare subsp. spontaneum (Wild barley).